Here is a 258-residue protein sequence, read N- to C-terminus: tRNA pseudouridine synthase A (258 aa).

Catalysis depends on D53, which acts as the Nucleophile. Y111 lines the substrate pocket.

It belongs to the tRNA pseudouridine synthase TruA family. Homodimer.

The catalysed reaction is uridine(38/39/40) in tRNA = pseudouridine(38/39/40) in tRNA. Its function is as follows. Formation of pseudouridine at positions 38, 39 and 40 in the anticodon stem and loop of transfer RNAs. The sequence is that of tRNA pseudouridine synthase A from Streptococcus agalactiae serotype V (strain ATCC BAA-611 / 2603 V/R).